The sequence spans 400 residues: Cysteine desulfurase (400 aa).

Pyridoxal 5'-phosphate-binding positions include 72–73, asparagine 152, glutamine 180, and 200–202; these read GT and SGH. N6-(pyridoxal phosphate)lysine is present on lysine 203. Residue threonine 238 coordinates pyridoxal 5'-phosphate. Cysteine 326 serves as the catalytic Cysteine persulfide intermediate. [2Fe-2S] cluster is bound at residue cysteine 326.

Belongs to the class-V pyridoxal-phosphate-dependent aminotransferase family. NifS/IscS subfamily. Homodimer. Requires pyridoxal 5'-phosphate as cofactor.

The enzyme catalyses (sulfur carrier)-H + L-cysteine = (sulfur carrier)-SH + L-alanine. Catalyzes the removal of elemental sulfur atoms from cysteine to produce alanine. Seems to participate in the biosynthesis of the nitrogenase metalloclusters by providing the inorganic sulfur required for the Fe-S core formation. The sequence is that of Cysteine desulfurase from Gluconacetobacter diazotrophicus (strain ATCC 49037 / DSM 5601 / CCUG 37298 / CIP 103539 / LMG 7603 / PAl5).